Reading from the N-terminus, the 122-residue chain is Large ribosomal subunit protein uL14 (122 aa).

It belongs to the universal ribosomal protein uL14 family. As to quaternary structure, part of the 50S ribosomal subunit. Forms a cluster with proteins L3 and L19. In the 70S ribosome, L14 and L19 interact and together make contacts with the 16S rRNA in bridges B5 and B8.

Functionally, binds to 23S rRNA. Forms part of two intersubunit bridges in the 70S ribosome. The polypeptide is Large ribosomal subunit protein uL14 (Chlorobium luteolum (strain DSM 273 / BCRC 81028 / 2530) (Pelodictyon luteolum)).